The following is a 73-amino-acid chain: Disintegrin lutosin (73 aa).

In terms of domain architecture, Disintegrin spans 1-73; it reads EAGEECDCGS…ADCPRNGLYG (73 aa). 6 disulfides stabilise this stretch: cysteine 6/cysteine 21, cysteine 8/cysteine 16, cysteine 15/cysteine 38, cysteine 29/cysteine 35, cysteine 34/cysteine 59, and cysteine 47/cysteine 66. Residues 51–53 carry the Cell attachment site motif; sequence RGD.

Belongs to the venom metalloproteinase (M12B) family. P-II subfamily. P-IIa sub-subfamily. Monomer (disintegrin). In terms of tissue distribution, expressed by the venom gland.

The protein localises to the secreted. In terms of biological role, inhibits fibrinogen interaction with platelets. Acts by binding to alpha-IIb/beta-3 (ITGA2B/ITGB3) on the platelet surface and inhibits aggregation induced by ADP, thrombin, platelet-activating factor and collagen. The chain is Disintegrin lutosin from Crotalus lutosus (Great basin rattlesnake).